A 394-amino-acid chain; its full sequence is Elongation factor Tu 2 (394 aa).

The 195-residue stretch at 10–204 folds into the tr-type G domain; that stretch reads KPHVNVGTIG…HLDTYIPEPE (195 aa). The segment at 19–26 is G1; it reads GHVDHGKT. 19-26 contacts GTP; the sequence is GHVDHGKT. T26 is a binding site for Mg(2+). The segment at 60-64 is G2; that stretch reads GITIN. The segment at 81–84 is G3; it reads DCPG. Residues 81–85 and 136–139 each bind GTP; these read DCPGH and NKCD. The interval 136–139 is G4; sequence NKCD. The tract at residues 174–176 is G5; it reads SAL.

The protein belongs to the TRAFAC class translation factor GTPase superfamily. Classic translation factor GTPase family. EF-Tu/EF-1A subfamily. As to quaternary structure, monomer.

Its subcellular location is the cytoplasm. The enzyme catalyses GTP + H2O = GDP + phosphate + H(+). GTP hydrolase that promotes the GTP-dependent binding of aminoacyl-tRNA to the A-site of ribosomes during protein biosynthesis. The chain is Elongation factor Tu 2 from Haemophilus influenzae (strain 86-028NP).